The following is a 183-amino-acid chain: 16 kDa gamma-zein (183 aa).

Residues 1–19 (MKVLIVALALLALAASAAS) form the signal peptide.

In terms of assembly, interacts with OP10 (via N-terminus).

It is found in the vacuole. The protein resides in the aleurone grain. Functionally, zeins are major seed storage proteins. The chain is 16 kDa gamma-zein from Zea mays (Maize).